A 71-amino-acid polypeptide reads, in one-letter code: Small ribosomal subunit protein eS17 (71 aa).

The protein belongs to the eukaryotic ribosomal protein eS17 family.

In Pyrobaculum neutrophilum (strain DSM 2338 / JCM 9278 / NBRC 100436 / V24Sta) (Thermoproteus neutrophilus), this protein is Small ribosomal subunit protein eS17.